The sequence spans 88 residues: Large ribosomal subunit protein eL31 (88 aa).

This sequence belongs to the eukaryotic ribosomal protein eL31 family.

The polypeptide is Large ribosomal subunit protein eL31 (rpl31e) (Archaeoglobus fulgidus (strain ATCC 49558 / DSM 4304 / JCM 9628 / NBRC 100126 / VC-16)).